The sequence spans 225 residues: Biosynthetic peptidoglycan transglycosylase (225 aa).

Residues 8-28 (VLLIFIGAILLIQLWIFSSLV) traverse the membrane as a helical segment.

This sequence belongs to the glycosyltransferase 51 family.

Its subcellular location is the cell inner membrane. The enzyme catalyses [GlcNAc-(1-&gt;4)-Mur2Ac(oyl-L-Ala-gamma-D-Glu-L-Lys-D-Ala-D-Ala)](n)-di-trans,octa-cis-undecaprenyl diphosphate + beta-D-GlcNAc-(1-&gt;4)-Mur2Ac(oyl-L-Ala-gamma-D-Glu-L-Lys-D-Ala-D-Ala)-di-trans,octa-cis-undecaprenyl diphosphate = [GlcNAc-(1-&gt;4)-Mur2Ac(oyl-L-Ala-gamma-D-Glu-L-Lys-D-Ala-D-Ala)](n+1)-di-trans,octa-cis-undecaprenyl diphosphate + di-trans,octa-cis-undecaprenyl diphosphate + H(+). It participates in cell wall biogenesis; peptidoglycan biosynthesis. In terms of biological role, peptidoglycan polymerase that catalyzes glycan chain elongation from lipid-linked precursors. This Acinetobacter baumannii (strain AB307-0294) protein is Biosynthetic peptidoglycan transglycosylase.